Consider the following 338-residue polypeptide: Heat-inducible transcription repressor HrcA (338 aa).

This sequence belongs to the HrcA family.

In terms of biological role, negative regulator of class I heat shock genes (grpE-dnaK-dnaJ and groELS operons). Prevents heat-shock induction of these operons. This chain is Heat-inducible transcription repressor HrcA, found in Bacillus cereus (strain 03BB102).